Here is a 501-residue protein sequence, read N- to C-terminus: Probable cytosol aminopeptidase (501 aa).

2 residues coordinate Mn(2+): Lys-268 and Asp-273. The active site involves Lys-280. Mn(2+) is bound by residues Asp-291, Asp-350, and Glu-352. Arg-354 is an active-site residue.

The protein belongs to the peptidase M17 family. Requires Mn(2+) as cofactor.

The protein resides in the cytoplasm. The enzyme catalyses Release of an N-terminal amino acid, Xaa-|-Yaa-, in which Xaa is preferably Leu, but may be other amino acids including Pro although not Arg or Lys, and Yaa may be Pro. Amino acid amides and methyl esters are also readily hydrolyzed, but rates on arylamides are exceedingly low.. The catalysed reaction is Release of an N-terminal amino acid, preferentially leucine, but not glutamic or aspartic acids.. In terms of biological role, presumably involved in the processing and regular turnover of intracellular proteins. Catalyzes the removal of unsubstituted N-terminal amino acids from various peptides. The chain is Probable cytosol aminopeptidase from Pseudoalteromonas atlantica (strain T6c / ATCC BAA-1087).